Consider the following 175-residue polypeptide: NADH-quinone oxidoreductase subunit B (175 aa).

The [4Fe-4S] cluster site is built by cysteine 49, cysteine 50, cysteine 115, and cysteine 145.

It belongs to the complex I 20 kDa subunit family. As to quaternary structure, NDH-1 is composed of 14 different subunits. Subunits NuoB, C, D, E, F, and G constitute the peripheral sector of the complex. Requires [4Fe-4S] cluster as cofactor.

It is found in the cell membrane. It carries out the reaction a quinone + NADH + 5 H(+)(in) = a quinol + NAD(+) + 4 H(+)(out). In terms of biological role, NDH-1 shuttles electrons from NADH, via FMN and iron-sulfur (Fe-S) centers, to quinones in the respiratory chain. The immediate electron acceptor for the enzyme in this species is believed to be a menaquinone. Couples the redox reaction to proton translocation (for every two electrons transferred, four hydrogen ions are translocated across the cytoplasmic membrane), and thus conserves the redox energy in a proton gradient. This Heliobacterium modesticaldum (strain ATCC 51547 / Ice1) protein is NADH-quinone oxidoreductase subunit B.